The sequence spans 667 residues: Protein MAIN-LIKE 2 (667 aa).

The residue at position 1 (M1) is an N-acetylmethionine. The span at 492-508 shows a compositional bias: basic residues; it reads MRGKERVRRKGMGKRRK. Disordered regions lie at residues 492-523 and 594-667; these read MRGKERVRRKGMGKRRKGIDPMEDYGGSEDES and KLQE…TVVA. Residues 512–523 show a composition bias toward acidic residues; that stretch reads PMEDYGGSEDES. 2 stretches are compositionally biased toward basic and acidic residues: residues 608–618 and 656–667; these read YDVKKEDKESK and SLDRRGENTVVA.

Expressed in root tips, the shoot apical meristem (SAM), leaves, mature flowers and embryos.

It localises to the nucleus. Maybe required to maintain cell division activity in meristematic cells. This chain is Protein MAIN-LIKE 2, found in Arabidopsis thaliana (Mouse-ear cress).